Consider the following 52-residue polypeptide: Rubredoxin-2 (52 aa).

A Rubredoxin-like domain is found at 1 to 52 (MEQWKCNICGYIYNPETGDPEGDIPAGTSFESLPDSWMCPVCGAGKEEFTKI). Positions 6, 9, 39, and 42 each coordinate Fe cation.

This sequence belongs to the rubredoxin family. As to quaternary structure, monomer. Fe(3+) serves as cofactor.

Serves as an electron acceptor for pyruvate ferredoxin oxidoreductase (PFOR). The sequence is that of Rubredoxin-2 (rub2) from Chlorobaculum tepidum (strain ATCC 49652 / DSM 12025 / NBRC 103806 / TLS) (Chlorobium tepidum).